The chain runs to 466 residues: ATP-dependent protease ATPase subunit HslU (466 aa).

ATP is bound by residues Ile-18, 60-65 (GVGKTE), Asp-279, Glu-344, and Arg-416.

Belongs to the ClpX chaperone family. HslU subfamily. A double ring-shaped homohexamer of HslV is capped on each side by a ring-shaped HslU homohexamer. The assembly of the HslU/HslV complex is dependent on binding of ATP.

Its subcellular location is the cytoplasm. ATPase subunit of a proteasome-like degradation complex; this subunit has chaperone activity. The binding of ATP and its subsequent hydrolysis by HslU are essential for unfolding of protein substrates subsequently hydrolyzed by HslV. HslU recognizes the N-terminal part of its protein substrates and unfolds these before they are guided to HslV for hydrolysis. This chain is ATP-dependent protease ATPase subunit HslU, found in Syntrophomonas wolfei subsp. wolfei (strain DSM 2245B / Goettingen).